Reading from the N-terminus, the 447-residue chain is Tubulin beta-1 chain (447 aa).

8 residues coordinate GTP: Q11, E69, S138, G142, T143, G144, N204, and N226. Position 69 (E69) interacts with Mg(2+). The segment at 427 to 447 (EATADEDAEFEEEQEAEVEEN) is disordered. A compositionally biased stretch (acidic residues) spans 429 to 447 (TADEDAEFEEEQEAEVEEN).

It belongs to the tubulin family. As to quaternary structure, dimer of alpha and beta chains. A typical microtubule is a hollow water-filled tube with an outer diameter of 25 nm and an inner diameter of 15 nM. Alpha-beta heterodimers associate head-to-tail to form protofilaments running lengthwise along the microtubule wall with the beta-tubulin subunit facing the microtubule plus end conferring a structural polarity. Microtubules usually have 13 protofilaments but different protofilament numbers can be found in some organisms and specialized cells. Requires Mg(2+) as cofactor.

The protein resides in the cytoplasm. It localises to the cytoskeleton. Its function is as follows. Tubulin is the major constituent of microtubules, a cylinder consisting of laterally associated linear protofilaments composed of alpha- and beta-tubulin heterodimers. Microtubules grow by the addition of GTP-tubulin dimers to the microtubule end, where a stabilizing cap forms. Below the cap, tubulin dimers are in GDP-bound state, owing to GTPase activity of alpha-tubulin. In Glossina morsitans morsitans (Savannah tsetse fly), this protein is Tubulin beta-1 chain.